The primary structure comprises 421 residues: MACARPLISVYSEKGESSGKNVTLPAVFKAPIRPDIVNFVHTNLRKNNRQPYAVSELAGHQTSAESWGTGRAVARIPRVRGGGTHRSGQGAFGNMCRGGRMFAPTKTWRRWHRRVNTTQKRYAICSALACLSLPALVMSKGHRIEEVPELPLVVEDKVEGYKKTKEAVLLLKKLKAWNDIKKVYASQRMRAGKGKMRNRRRIQRRGPCIIYNEDNGIIKAFRKHPGITLLNVSKLNILKLAPGGHVGRFCIWTESAFRKLDDLYGTWRKAASLKSNYNLPMHKMLNTDLSRILKMPRDPRALRAPRKKIHRRVLKKNPLKNLRIMLKLNPYAKTMRRNTILRQAKNHKLRMDKAAAALEAKSEEKGVPGKKPRRKKGKKTVGVKKPKKPVVGKKAAATKKPAADKKPAEKKPTTEEKKPAA.

N-acetylalanine is present on alanine 2. Lysine 14 bears the N6-acetyllysine mark. An Omega-N-methylarginine modification is found at arginine 97. An N6-acetyllysine modification is found at lysine 106. Residue lysine 239 forms a Glycyl lysine isopeptide (Lys-Gly) (interchain with G-Cter in SUMO2) linkage. The residue at position 259 (lysine 259) is an N6-acetyllysine. Position 266 is a phosphothreonine (threonine 266). Serine 290 bears the Phosphoserine mark. Arginine 300 is modified (citrulline). A Glycyl lysine isopeptide (Lys-Gly) (interchain with G-Cter in SUMO2) cross-link involves residue lysine 327. Lysine 333 and lysine 353 each carry N6-acetyllysine. Residues 359–421 (EAKSEEKGVP…PTTEEKKPAA (63 aa)) form a disordered region. An N6-acetyllysine; alternate modification is found at lysine 361. Lysine 361 is covalently cross-linked (Glycyl lysine isopeptide (Lys-Gly) (interchain with G-Cter in SUMO1); alternate). Serine 362 is modified (phosphoserine). The span at 368–391 (PGKKPRRKKGKKTVGVKKPKKPVV) shows a compositional bias: basic residues. The span at 401 to 421 (PAADKKPAEKKPTTEEKKPAA) shows a compositional bias: basic and acidic residues.

The protein belongs to the universal ribosomal protein uL4 family. In terms of assembly, component of the large ribosomal subunit. May bind IPO9 with low affinity. Interacts with RBM3. Post-translationally, citrullinated by PADI4.

The protein localises to the cytoplasm. Its function is as follows. Component of the large ribosomal subunit. The ribosome is a large ribonucleoprotein complex responsible for the synthesis of proteins in the cell. The polypeptide is Large ribosomal subunit protein uL4 (RPL4) (Canis lupus familiaris (Dog)).